A 503-amino-acid polypeptide reads, in one-letter code: Excitatory amino acid transporter (503 aa).

The Cytoplasmic segment spans residues methionine 1–lysine 18. 3 consecutive transmembrane segments (helical) span residues asparagine 19–leucine 39, leucine 59–leucine 79, and threonine 96–isoleucine 116. Residues histidine 117–glutamate 198 lie on the Extracellular side of the membrane. 2 N-linked (GlcNAc...) asparagine glycosylation sites follow: asparagine 177 and asparagine 187. A run of 5 helical transmembrane segments spans residues tyrosine 199 to leucine 219, valine 239 to isoleucine 259, valine 281 to valine 301, alanine 369 to valine 389, and isoleucine 400 to valine 420.

It belongs to the dicarboxylate/amino acid:cation symporter (DAACS) (TC 2.A.23) family.

It is found in the membrane. In terms of biological role, transports L-glutamate and also L- and D-aspartate. Essential for terminating the postsynaptic action of glutamate by rapidly removing released glutamate from the synaptic cleft. Acts as a symport by cotransporting sodium. In Caenorhabditis elegans, this protein is Excitatory amino acid transporter (glt-1).